Consider the following 937-residue polypeptide: Isoleucine--tRNA ligase (937 aa).

The short motif at 58-68 (PYANGDIHIGH) is the 'HIGH' region element. Residue E561 participates in L-isoleucyl-5'-AMP binding. The 'KMSKS' region motif lies at 602 to 606 (KMSKS). Residue K605 participates in ATP binding. The Zn(2+) site is built by C900, C903, C920, and C923.

It belongs to the class-I aminoacyl-tRNA synthetase family. IleS type 1 subfamily. As to quaternary structure, monomer. Zn(2+) serves as cofactor.

It is found in the cytoplasm. The enzyme catalyses tRNA(Ile) + L-isoleucine + ATP = L-isoleucyl-tRNA(Ile) + AMP + diphosphate. In terms of biological role, catalyzes the attachment of isoleucine to tRNA(Ile). As IleRS can inadvertently accommodate and process structurally similar amino acids such as valine, to avoid such errors it has two additional distinct tRNA(Ile)-dependent editing activities. One activity is designated as 'pretransfer' editing and involves the hydrolysis of activated Val-AMP. The other activity is designated 'posttransfer' editing and involves deacylation of mischarged Val-tRNA(Ile). This is Isoleucine--tRNA ligase from Alcanivorax borkumensis (strain ATCC 700651 / DSM 11573 / NCIMB 13689 / SK2).